A 227-amino-acid chain; its full sequence is Pyridoxine/pyridoxamine 5'-phosphate oxidase (227 aa).

Substrate contacts are provided by residues 23-26 and lysine 81; that span reads RREY. FMN is bound by residues 76 to 81, 91 to 92, arginine 97, lysine 98, and glutamine 120; these read RIVLLK and YT. 3 residues coordinate substrate: tyrosine 138, arginine 142, and serine 146. FMN contacts are provided by residues 155-156 and tryptophan 200; that span reads QS. Substrate is bound at residue 206–208; the sequence is RLH. Arginine 210 is an FMN binding site.

The protein belongs to the pyridoxamine 5'-phosphate oxidase family. As to quaternary structure, homodimer. FMN serves as cofactor.

The enzyme catalyses pyridoxamine 5'-phosphate + O2 + H2O = pyridoxal 5'-phosphate + H2O2 + NH4(+). It carries out the reaction pyridoxine 5'-phosphate + O2 = pyridoxal 5'-phosphate + H2O2. Its pathway is cofactor metabolism; pyridoxal 5'-phosphate salvage; pyridoxal 5'-phosphate from pyridoxamine 5'-phosphate: step 1/1. It participates in cofactor metabolism; pyridoxal 5'-phosphate salvage; pyridoxal 5'-phosphate from pyridoxine 5'-phosphate: step 1/1. Catalyzes the oxidation of either pyridoxine 5'-phosphate (PNP) or pyridoxamine 5'-phosphate (PMP) into pyridoxal 5'-phosphate (PLP). This Pectobacterium atrosepticum (strain SCRI 1043 / ATCC BAA-672) (Erwinia carotovora subsp. atroseptica) protein is Pyridoxine/pyridoxamine 5'-phosphate oxidase.